Reading from the N-terminus, the 211-residue chain is uncharacterized protein (211 aa).

Positions 187 to 211 (LKVSEQENSEAPVSEPKEDEKTKKD) are disordered. Residues 201-211 (EPKEDEKTKKD) show a composition bias toward basic and acidic residues.

This is an uncharacterized protein from Spiroplasma citri.